The primary structure comprises 245 residues: MKIDIIGDIHGCYSEFVKLTKKLGYEWDSGIPLHPDGRKLGFVGDLTDRGPQSLQTVEVVYSLVERESAYYVPGNHCNKLYRFFLGRNVQITHGLETTVEEYRALPPSEQAMIRKKFMRLYEAAPLYAQLDNGRLIIAHAGLRRDYIGRNDKKVQTFVLYGDITGETNPDGTPVRRDWAKRYKGSAWIVYGHTPVKQPRIINRTINIDTGCVFGGALTAFRYPEIETISVPSSLPYVPEKFRTFD.

This sequence belongs to the PrpE family. It depends on Ni(2+) as a cofactor.

The enzyme catalyses P(1),P(4)-bis(5'-guanosyl) tetraphosphate + H2O = GMP + GTP + 2 H(+). Functionally, asymmetrically hydrolyzes Ap4p to yield AMP and ATP. In Geobacillus sp. (strain WCH70), this protein is Bis(5'-nucleosyl)-tetraphosphatase PrpE [asymmetrical].